The chain runs to 313 residues: MARTEDDSWEITESVGATALGVASARAAETRSQHPLISDPFAQVFLDAVGDGVWNWHSAPQLPAELLEIEPDLPLQMEAMVSYMASRTAFFDEFFLDATRAGIGQAVILAAGLDSRAWRLPWPAGTTVFELDQPRVLEFKAATLAEHGAEPACGRVAVAVDLRQDWPTALRQAGFDPSVSSVWSAEGLMPYLPAVAQDLLFERVQGLTVRASRIAVEALGPKFLDPQVRANRSARIERIRAVMAHVEPQREIPRTDELWYFEEREDVGDWFRRHDWDVTVTPSGELMAGYGRAAAAQVEDRVPTNLFVAAQRN.

S-adenosyl-L-methionine-binding positions include D132 and 161-162 (DL).

Belongs to the UPF0677 family.

Exhibits S-adenosyl-L-methionine-dependent methyltransferase activity. The protein is Putative S-adenosyl-L-methionine-dependent methyltransferase MUL_0706 of Mycobacterium ulcerans (strain Agy99).